The primary structure comprises 408 residues: tRNA-specific 2-thiouridylase MnmA (408 aa).

Residues 27–34 and Leu53 each bind ATP; that span reads AMSGGVDS. Cys121 functions as the Nucleophile in the catalytic mechanism. A disulfide bond links Cys121 and Cys222. Residue Gly145 participates in ATP binding. Residues 172–174 form an interaction with tRNA region; it reads RDQ. Residue Cys222 is the Cysteine persulfide intermediate of the active site.

It belongs to the MnmA/TRMU family.

It localises to the cytoplasm. The enzyme catalyses S-sulfanyl-L-cysteinyl-[protein] + uridine(34) in tRNA + AH2 + ATP = 2-thiouridine(34) in tRNA + L-cysteinyl-[protein] + A + AMP + diphosphate + H(+). In terms of biological role, catalyzes the 2-thiolation of uridine at the wobble position (U34) of tRNA, leading to the formation of s(2)U34. The protein is tRNA-specific 2-thiouridylase MnmA of Rhizobium johnstonii (strain DSM 114642 / LMG 32736 / 3841) (Rhizobium leguminosarum bv. viciae).